Here is a 926-residue protein sequence, read N- to C-terminus: Centrosomal protein of 104 kDa (926 aa).

A coiled-coil region spans residues 212 to 279; sequence EVAQIIRRLD…DLAKEKKQQM (68 aa). Residues 345 to 419 are disordered; that stretch reads LQEKPSASSP…RGVAGEPEPL (75 aa). Over residues 398–409 the composition is skewed to basic and acidic residues; it reads AEVKEADSDVRR. 2 HEAT repeats span residues 522–558 and 603–639; these read THCV…ALFK and GFTV…YRQH. Residues 678–730 adopt a coiled-coil conformation; that stretch reads EAEVRAQKRVATKEAEKQKKEEMKALQGQSGELRETQAGVQEKESEAVKLRNQ. 2 stretches are compositionally biased toward basic and acidic residues: residues 690–701 and 718–729; these read KEAEKQKKEEMK and QEKESEAVKLRN. Disordered stretches follow at residues 690–741 and 885–926; these read KEAE…VLPD and APQQ…YMRR. The segment covering 889-903 has biased composition (low complexity); that stretch reads GKGPAAAKSSTSAPK. Residues 916-926 are compositionally biased toward polar residues; that stretch reads SKSSSRTYMRR.

In terms of assembly, interacts with CCP110 and CEP97. Interacts with ARMC9, TOGARAM1, CCDC66 and CSPP1.

The protein localises to the cell projection. It localises to the cilium. Its subcellular location is the cytoplasm. The protein resides in the cytoskeleton. It is found in the microtubule organizing center. The protein localises to the centrosome. It localises to the centriole. Its subcellular location is the spindle pole. Its function is as follows. Required for ciliogenesis and for structural integrity at the ciliary tip. The chain is Centrosomal protein of 104 kDa (Cep104) from Mus musculus (Mouse).